Consider the following 513-residue polypeptide: Probable G-protein coupled receptor 176 (513 aa).

The disordered stretch occupies residues 1 to 25; the sequence is MGHNGSWVSPNTSHPRNTSGAQAGA. Topologically, residues 1–41 are extracellular; sequence MGHNGSWVSPNTSHPRNTSGAQAGANSSAFGELSEAQLYRQ. N-linked (GlcNAc...) asparagine glycans are attached at residues N4, N11, N17, and N26. Residues 42-64 traverse the membrane as a helical segment; the sequence is FTTTVQVVIFIGSLLGNFTVLWS. At 65–77 the chain is on the cytoplasmic side; it reads TCRTTVFKSVTNR. A helical transmembrane segment spans residues 78 to 98; that stretch reads FIKNLACSGICASVVCVPFDI. Over 99–108 the chain is Extracellular; that stretch reads ILSTSPHCCW. Residues 109–129 traverse the membrane as a helical segment; sequence WIYTMLFCKVLKFLHKVFCSV. The Cytoplasmic portion of the chain corresponds to 130-157; that stretch reads TVLSFPAIALDRYYSVLYPLERKISDAK. The chain crosses the membrane as a helical span at residues 158–177; it reads SRELVMYIWAHAVVASVPVF. The Extracellular segment spans residues 178 to 204; it reads AVTNVADIYATSTCTEVWSNSLGHLVY. Residues 205–225 form a helical membrane-spanning segment; sequence VLIYNVTTVIVPVAVVFLFLI. At 226–264 the chain is on the cytoplasmic side; sequence LIRRALSASQKKKVIIAALRTPQNTISIPYASQREAELH. Residues 265-285 form a helical membrane-spanning segment; the sequence is ATLLSMVTVFILCSVPYATLV. The Extracellular portion of the chain corresponds to 286–301; the sequence is VYQTVLNVPNTSVFLL. Residues 302 to 322 form a helical membrane-spanning segment; that stretch reads LTAIWLPKVSLLANPVLFLTV. Residues 323 to 513 are Cytoplasmic-facing; sequence NRSVRKCLVG…KVSIFPKVDS (191 aa). Positions 404 to 432 are disordered; the sequence is VLTSSPEGEESQLAPSVPPPGTVDSVSRV.

Belongs to the G-protein coupled receptor 1 family. Expressed in brain, lung, heart, stomach, intestine, cultured aortic smooth muscle cells and cardiac myocytes.

It is found in the cell membrane. Its function is as follows. Orphan receptor involved in normal circadian rhythm behavior. Acts through the G-protein subclass G(z)-alpha and has an agonist-independent basal activity to repress cAMP production. The protein is Probable G-protein coupled receptor 176 (Gpr176) of Rattus norvegicus (Rat).